A 196-amino-acid polypeptide reads, in one-letter code: Imidazoleglycerol-phosphate dehydratase (196 aa).

The protein belongs to the imidazoleglycerol-phosphate dehydratase family.

Its subcellular location is the cytoplasm. It carries out the reaction D-erythro-1-(imidazol-4-yl)glycerol 3-phosphate = 3-(imidazol-4-yl)-2-oxopropyl phosphate + H2O. The protein operates within amino-acid biosynthesis; L-histidine biosynthesis; L-histidine from 5-phospho-alpha-D-ribose 1-diphosphate: step 6/9. This is Imidazoleglycerol-phosphate dehydratase from Solidesulfovibrio magneticus (strain ATCC 700980 / DSM 13731 / RS-1) (Desulfovibrio magneticus).